A 242-amino-acid polypeptide reads, in one-letter code: 2-amino-5-formylamino-6-ribosylaminopyrimidin-4(3H)-one 5'-monophosphate deformylase (242 aa).

4 residues coordinate Fe cation: glutamate 46, histidine 48, aspartate 57, and histidine 125.

It belongs to the creatininase superfamily. FAPy deformylase family. Homodimer. It depends on Fe(2+) as a cofactor. Zn(2+) is required as a cofactor.

The catalysed reaction is 2-amino-5-formylamino-6-(5-phospho-D-ribosylamino)pyrimidin-4(3H)-one + H2O = 2,5-diamino-6-(1-D-ribosylamino)pyrimidin-4(3H)-one 5'-phosphate + formate + H(+). It functions in the pathway cofactor biosynthesis; coenzyme F420 biosynthesis. Its pathway is cofactor biosynthesis; riboflavin biosynthesis. In terms of biological role, catalyzes the hydrolysis of the formamide of 2-amino-5-formylamino-6-ribosylamino-4(3H)-pyrimidinone 5'-monophosphate (FAPy) to form 2,5-diamino-6-ribosylamino-4(3H)-pyrimidinone 5'-phosphate (APy). In Methanococcus aeolicus (strain ATCC BAA-1280 / DSM 17508 / OCM 812 / Nankai-3), this protein is 2-amino-5-formylamino-6-ribosylaminopyrimidin-4(3H)-one 5'-monophosphate deformylase.